We begin with the raw amino-acid sequence, 269 residues long: MKSIFKVRGCVSHAAQFCQKRTVVSTGTSNTATAGAVRKSFNSTETKPVFATKSEAGNGSHMKEYSSGINSKLGGTPLETRSTADDSLNNSYKQVKGDIDWYTSWYGLGMKPFEAKVQKDLIEPLDPKDIEIKPDGLIYLPEIKYRRILNKAFGAGGWGLVPRSQTIVTSKLVTREYGLICHGQLISVARGEQDYFNEAGIPTATEGCKSNALMRCCKDLGVGSELWDPVFIKKFKVDHCTEKFVEHVTTKRKKKIWLRKDRQVEYPYK.

Residues 1-30 (MKSIFKVRGCVSHAAQFCQKRTVVSTGTSN) constitute a mitochondrion transit peptide.

Belongs to the MGM101 family.

Its subcellular location is the mitochondrion matrix. The protein resides in the mitochondrion nucleoid. Performs an essential function in the repair of oxidatively damaged mtDNA that is required for the maintenance of the mitochondrial genome. Binds to DNA. In Saccharomyces cerevisiae (strain ATCC 204508 / S288c) (Baker's yeast), this protein is Mitochondrial genome maintenance protein MGM101 (MGM101).